Consider the following 469-residue polypeptide: 3-isopropylmalate dehydratase large subunit 1 (469 aa).

[4Fe-4S] cluster contacts are provided by Cys344, Cys404, and Cys407.

This sequence belongs to the aconitase/IPM isomerase family. LeuC type 1 subfamily. As to quaternary structure, heterodimer of LeuC and LeuD. [4Fe-4S] cluster is required as a cofactor.

The enzyme catalyses (2R,3S)-3-isopropylmalate = (2S)-2-isopropylmalate. Its pathway is amino-acid biosynthesis; L-leucine biosynthesis; L-leucine from 3-methyl-2-oxobutanoate: step 2/4. In terms of biological role, catalyzes the isomerization between 2-isopropylmalate and 3-isopropylmalate, via the formation of 2-isopropylmaleate. In Rubrobacter xylanophilus (strain DSM 9941 / JCM 11954 / NBRC 16129 / PRD-1), this protein is 3-isopropylmalate dehydratase large subunit 1.